The sequence spans 624 residues: Actin-related protein 8 (624 aa).

At Met-1 the chain carries N-acetylmethionine. Basic and acidic residues predominate over residues 1 to 25; the sequence is MTQAEKGDTENGKEKGGEKEKEQRG. Positions 1–29 are disordered; that stretch reads MTQAEKGDTENGKEKGGEKEKEQRGVKRP. Positions 55 and 56 each coordinate ATP. Phosphoserine is present on Ser-132. 283–286 is an ATP binding site; the sequence is DVGD. Phosphoserine is present on Ser-412. Residues 430 to 462 form a disordered region; sequence SKQEQSAKATADRKSASKPIGFEGDLRGQSSDL.

It belongs to the actin family. ARP8 subfamily. As to quaternary structure, component of the chromatin remodeling INO80 complex; specifically part of a complex module associated with the DBINO domain of INO80. Interacts with ACTR5; the interaction is observed in asynchronous (interphase) cells but not in metaphase-arrested cells indicative for a possible dissociation of the INO80 complex in mitotic cells. Exists as monomers and dimers, but the dimer is most probably the biologically relevant form required for stable interactions with histones that exploits the twofold symmetry of the nucleosome core.

It localises to the nucleus. The protein resides in the chromosome. Plays an important role in the functional organization of mitotic chromosomes. Exhibits low basal ATPase activity, and unable to polymerize. Functionally, proposed core component of the chromatin remodeling INO80 complex which is involved in transcriptional regulation, DNA replication and probably DNA repair. Required for the recruitment of INO80 (and probably the INO80 complex) to sites of DNA damage. Strongly prefer nucleosomes and H3-H4 tetramers over H2A-H2B dimers, suggesting it may act as a nucleosome recognition module within the complex. This is Actin-related protein 8 (ACTR8) from Homo sapiens (Human).